Reading from the N-terminus, the 152-residue chain is Ninjurin-1 (152 aa).

M1 carries the N-acetylmethionine modification. The disordered stretch occupies residues 1–26 (MDSGTEEYELNGGLPPGTPGSPDASP). At 1-78 (MDSGTEEYEL…EQGPSFAFYV (78 aa)) the chain is on the extracellular side. Residues S21 and S25 each carry the phosphoserine modification. The N-terminal adhesion motif stretch occupies residues 26 to 37 (PARWGWRHGPIN). The interval 40-69 (HYASKKSAAESMLDIALLMANASQLKAVVE) is required to induce plasma membrane rupture. Residues 44–55 (KKSAAESMLDIA) are helix alpha1. The helix alpha2 stretch occupies residues 58-74 (MANASQLKAVVEQGPSF). N-linked (GlcNAc...) asparagine glycosylation occurs at N60. The chain crosses the membrane as a helical span at residues 79 to 103 (PLVVLISISLVLQIGVGVLLIFLVK). The Cytoplasmic portion of the chain corresponds to 104 to 113 (YDLNNPAKHA). The helical transmembrane segment at 114-138 (KLDFLNNLATGLVFIIVVVNIFITA) threads the bilayer. At 139–152 (FGVQKPLMDMAPQQ) the chain is on the extracellular side.

This sequence belongs to the ninjurin family. Homodimer; in absence of death stimuli, forms an inactive homodimer. Homooligomer; in response to death stimuli, homooligomerizes into long, highly branched filaments and large, ring-shaped structures in the membrane. Post-translationally, cleaved by MMP9 protease to generate the Secreted ninjurin-1 form. In terms of processing, N-linked glycosylation is required for homooligomerization. Widely expressed in both adult and embryonic tissues, primarily those of epithelial origin.

Its subcellular location is the cell membrane. It is found in the synaptic cell membrane. It localises to the secreted. In response to death stimuli, homooligomerizes and disrupts membrane integrity by introducing the hydrophilic faces of alpha1 and alpha2 helices into the hydrophobic membrane. Homooligomerization and ability to mediate plasma membrane rupture is inhibited by glycine; it is unclear whether glycine directly or indirectly inhibits homooligomerization. In normal conditions, NINJ1 is autoinhibited via formation of a homodimer: in the inactive homodimer, the alpha1 and alpha2 helices (residues 44-74) form a single transmembrane region without a kink, in which hydrophilic faces of alpha1 and alpha2 helices are sequestered. Functionally, effector of various programmed cell death, such as pyroptosis and necroptosis, which mediates plasma membrane rupture (cytolysis). Oligomerizes in response to death stimuli and forms ring-like structures on the plasma membrane: acts by cutting and shedding membrane disks, like a cookie cutter, leading to membrane damage and loss that cannot be repaired by the cell. Plasma membrane rupture leads to release intracellular molecules named damage-associated molecular patterns (DAMPs) that propagate the inflammatory response. Mechanistically, mediates plasma membrane rupture by introducing hydrophilic faces of 2 alpha helices into the hydrophobic membrane. Induces plasma membrane rupture downstream of Gasdermin (GSDMA, GSDMB, GSDMC, GSDMD, or GSDME) or MLKL during pyroptosis or necroptosis, respectively. Acts as an effector of PANoptosis downstream of CASP1, CASP4, CASP8 and RIPK3. Also induces plasma membrane rupture in response to cell swelling caused by osmotic stress and ferroptosis downstream of lipid peroxidation. Acts as a regulator of Toll-like receptor 4 (TLR4) signaling triggered by lipopolysaccharide (LPS) during systemic inflammation; directly binds LPS. Involved in leukocyte migration during inflammation by promoting transendothelial migration of macrophages via homotypic binding. Promotes the migration of monocytes across the brain endothelium to central nervous system inflammatory lesions. Also acts as a homophilic transmembrane adhesion molecule involved in various processes such as axonal growth, cell chemotaxis and angiogenesis. Promotes cell adhesion by mediating homophilic interactions via its extracellular N-terminal adhesion motif (N-NAM). Involved in the progression of the inflammatory stress by promoting cell-to-cell interactions between immune cells and endothelial cells. Plays a role in nerve regeneration by promoting maturation of Schwann cells. Acts as a regulator of angiogenesis. Promotes the formation of new vessels by mediating the interaction between capillary pericyte cells and endothelial cells. Promotes osteoclasts development by enhancing the survival of prefusion osteoclasts. Also involved in striated muscle growth and differentiation. Its function is as follows. Secreted form generated by cleavage, which has chemotactic activity. Acts as an anti-inflammatory mediator by promoting monocyte recruitment, thereby ameliorating atherosclerosis. This chain is Ninjurin-1, found in Homo sapiens (Human).